We begin with the raw amino-acid sequence, 323 residues long: NADH-ubiquinone oxidoreductase chain 1 (323 aa).

8 helical membrane passes run 8–28 (LLNP…LTLI), 74–94 (LLFI…WLPL), 105–125 (LGML…LGSG), 150–170 (SLGL…LTTF), 176–196 (TIWL…STLA), 227–247 (LFFL…TILF), 258–278 (ELTS…FLWV), and 298–318 (FLPI…FTGS).

The protein belongs to the complex I subunit 1 family.

The protein resides in the mitochondrion inner membrane. The catalysed reaction is a ubiquinone + NADH + 5 H(+)(in) = a ubiquinol + NAD(+) + 4 H(+)(out). In terms of biological role, core subunit of the mitochondrial membrane respiratory chain NADH dehydrogenase (Complex I) that is believed to belong to the minimal assembly required for catalysis. Complex I functions in the transfer of electrons from NADH to the respiratory chain. The immediate electron acceptor for the enzyme is believed to be ubiquinone. This Latimeria chalumnae (Coelacanth) protein is NADH-ubiquinone oxidoreductase chain 1 (MT-ND1).